The following is a 2507-amino-acid chain: Highly reducing polyketide synthase lcsB (2507 aa).

A Ketosynthase family 3 (KS3) domain is found at 2–393 (AEPIAVVGMA…GVNAHVIVES (392 aa)). The disordered stretch occupies residues 399–501 (NHDRGLSNGS…RNGYSGDDVE (103 aa)). Polar residues-rich tracts occupy residues 405-414 (SNGSTTSSSP) and 470-488 (NDTP…TSHT). A malonyl-CoA:ACP transacylase (MAT) domain region spans residues 581–900 (WVFTGQGAQW…DESLLQLAGK (320 aa)). An N-terminal hotdog fold region spans residues 953 to 1080 (HELLGSRVTE…GEARASVDKA (128 aa)). Residues 953 to 1232 (HELLGSRVTE…FKASALTRSD (280 aa)) are dehydratase (DH) domain. Residues 953-1234 (HELLGSRVTE…ASALTRSDDE (282 aa)) enclose the PKS/mFAS DH domain. Histidine 984 serves as the catalytic Proton acceptor; for dehydratase activity. Residues 1092-1234 (ARTVDANEWY…ASALTRSDDE (143 aa)) are C-terminal hotdog fold. The active-site Proton donor; for dehydratase activity is the aspartate 1151. The segment at 1402–1570 (LGHTNPRLRI…EMVAAGFAEP (169 aa)) is methyltransferase (CMet) domain. Positions 1793–2105 (GLLHTMGWSQ…GGRHIGKIIV (313 aa)) are enoyl reductase (ER) (ER) domain. The ketoreductase (KR) domain stretch occupies residues 2130 to 2303 (SYLLVGGLGG…ASVIDIGVMG (174 aa)). In terms of domain architecture, Carrier spans 2425 to 2503 (EESTVIIATA…SLGDYIRTAL (79 aa)). O-(pantetheine 4'-phosphoryl)serine is present on serine 2463.

It functions in the pathway secondary metabolite biosynthesis. Functionally, highly reducing polyketide synthase; part of the gene cluster that mediates the biosynthesis of the lipopeptide antibiotics leucinostatins that show extensive biological activities, including antimalarial, antiviral, antibacterial, antifungal, and antitumor activities, as well as phytotoxic. Leucinostatin A contains nine amino acid residues, including the unusual amino acid 4-methyl-L-proline (MePro), 2-amino-6-hydroxy-4-methyl-8-oxodecanoic acid (AHyMeOA), 3-hydroxyleucine (HyLeu), alpha-aminoisobutyric acid (AIB), beta-Ala, a 4-methylhex-2-enoic acid at the N-terminus as well as a N1,N1-dimethylpropane-1,2-diamine (DPD) at the C-terminus. The biosynthesis of leucinostatins is probably initiated with the assembly of 4-methylhex-2-enoic acid by a reducing PKS. Two reducing polyketide synthases, lcsB and lcsC, have been identified in the cluster and it is not clear which is the one that assembles 4-methylhex-2-enoic acid since both contain KS, AT, DH, cMT, ER, KR and ACP domains. The polyketide residue might be transferred to the NRPS lcsA, mediated by two additional enzymes, the acyl-CoA ligase lcsD and the thioesterase lcsE. The linear polyketide carboxylic acid, which is released from PKS, is converted to a CoA thioester by lcsD, and then lcsE hydrolyzes the thiol bond and shuttles the polyketide intermediate to lcsA. The C domain of the first module catalyzed the condensation of 4-methylhex-2-enoic acid and MePro carried by domain A1, followed by successive condensations of nine amino acids to trigger the elongation of the linear peptide. A5 and A6 domains of lcsA are proposed to incorporate leucine, A2 AHyMeOA, and A3 incorporates HyLeu. A4, A7 and A8 incorporate AIB. The AHyMeOA in leucinostatin A activated by the A2 might be produced by the second PKS (lcsB or lcsC) present within the cluster. The MePro is probably produced via leucine cyclization and may originate from a separate pathway, independent of the cluster. Another nonproteinogenic amino acid, beta-Ala, could be produced by an aspartic acid decarboxylase also localized outside of the cluster. Two candidates are VFPBJ_01400 and VFPBJ_10476. The final peptide scaffold may be released by the NAD(P)H-dependent thioester reductase (TE) at the C-terminal region of lcsA. Transamination of the lcsA product by the transaminase lcsP may produce DPD at the C-terminus. Further hydroxylation steps performed alternatively by the cytochrome P450 monooxygenases lcsI, lcsK andr lcsN then yield the non-methylated leucinostatins precursor. It is also possible that leucines can be hydroxylated prior to their incorporation into the peptide. Varying extents of methylation then lead to the formation of leucinostatins A and B. This Purpureocillium lilacinum (Paecilomyces lilacinus) protein is Highly reducing polyketide synthase lcsB.